The sequence spans 195 residues: Imidazoleglycerol-phosphate dehydratase (195 aa).

Belongs to the imidazoleglycerol-phosphate dehydratase family.

Its subcellular location is the cytoplasm. It catalyses the reaction D-erythro-1-(imidazol-4-yl)glycerol 3-phosphate = 3-(imidazol-4-yl)-2-oxopropyl phosphate + H2O. The protein operates within amino-acid biosynthesis; L-histidine biosynthesis; L-histidine from 5-phospho-alpha-D-ribose 1-diphosphate: step 6/9. The protein is Imidazoleglycerol-phosphate dehydratase of Cupriavidus taiwanensis (strain DSM 17343 / BCRC 17206 / CCUG 44338 / CIP 107171 / LMG 19424 / R1) (Ralstonia taiwanensis (strain LMG 19424)).